The sequence spans 621 residues: Chaperone protein HscA homolog (621 aa).

The protein belongs to the heat shock protein 70 family.

In terms of biological role, chaperone involved in the maturation of iron-sulfur cluster-containing proteins. Has a low intrinsic ATPase activity which is markedly stimulated by HscB. This is Chaperone protein HscA homolog from Pseudomonas fluorescens (strain Pf0-1).